The chain runs to 360 residues: Homeobox-leucine zipper protein HOX21 (360 aa).

Disordered stretches follow at residues Gln-25 to Gln-75 and Met-88 to Arg-126. The span at His-36–Leu-55 shows a compositional bias: basic residues. The span at Gly-56–Pro-68 shows a compositional bias: pro residues. A compositionally biased stretch (gly residues) spans Gly-97–Gly-109. Residues Ala-121–Gln-180 constitute a DNA-binding region (homeobox). A leucine-zipper region spans residues Lys-179–Ser-223. Disordered stretches follow at residues Glu-233 to Gly-278 and Gly-299 to Gln-328. Positions Ala-234–Ile-246 are enriched in polar residues.

This sequence belongs to the HD-ZIP homeobox family. Class I subfamily. Expressed in seedlings, roots, stems, leaf blades and panicles.

It is found in the nucleus. Probable transcription factor. In Oryza sativa subsp. indica (Rice), this protein is Homeobox-leucine zipper protein HOX21 (HOX21).